Consider the following 115-residue polypeptide: Large ribosomal subunit protein bL35m (115 aa).

The protein belongs to the bacterial ribosomal protein bL35 family.

The protein localises to the mitochondrion. In Saccharomyces cerevisiae (strain YJM789) (Baker's yeast), this protein is Large ribosomal subunit protein bL35m.